The sequence spans 333 residues: Eukaryotic translation initiation factor 3 subunit I (333 aa).

WD repeat units follow at residues 8-47 (GHERSITQIKYNREGDLLFTVAKDPIVNVWYSVNGERLGT), 50-91 (GHTG…ALLK), 144-183 (CNDSKITSAVWGPLGECIIAGHESGELNQYSAKSGEVLVN), and 186-225 (EHSRQINDIQLSREMTMFVTASKDNTAKLFDSTTLEHQKT). T219 bears the Phosphothreonine mark. K264 is subject to N6-acetyllysine. A Glycyl lysine isopeptide (Lys-Gly) (interchain with G-Cter in ubiquitin) cross-link involves residue K282. The WD 5 repeat unit spans residues 283–324 (GHFGPINSVAFHPDGKSYSSGGEDGYVRIHYFDPQYFEFEFE). Position 308 is a phosphotyrosine (Y308).

Belongs to the eIF-3 subunit I family. In terms of assembly, component of the eukaryotic translation initiation factor 3 (eIF-3) complex, which is composed of 13 subunits: EIF3A, EIF3B, EIF3C, EIF3D, EIF3E, EIF3F, EIF3G, EIF3H, EIF3I, EIF3J, EIF3K, EIF3L and EIF3M. The eIF-3 complex appears to include 3 stable modules: module A is composed of EIF3A, EIF3B, EIF3G and EIF3I; module B is composed of EIF3F, EIF3H, and EIF3M; and module C is composed of EIF3C, EIF3D, EIF3E, EIF3K and EIF3L. EIF3C of module C binds EIF3B of module A and EIF3H of module B, thereby linking the three modules. EIF3J is a labile subunit that binds to the eIF-3 complex via EIF3B. The eIF-3 complex interacts with RPS6KB1 under conditions of nutrient depletion. Mitogenic stimulation leads to binding and activation of a complex composed of MTOR and RPTOR, leading to phosphorylation and release of RPS6KB1 and binding of EIF4B to eIF-3. Phosphorylated by TGF-beta type II receptor.

It is found in the cytoplasm. Functionally, component of the eukaryotic translation initiation factor 3 (eIF-3) complex, which is required for several steps in the initiation of protein synthesis. The eIF-3 complex associates with the 40S ribosome and facilitates the recruitment of eIF-1, eIF-1A, eIF-2:GTP:methionyl-tRNAi and eIF-5 to form the 43S pre-initiation complex (43S PIC). The eIF-3 complex stimulates mRNA recruitment to the 43S PIC and scanning of the mRNA for AUG recognition. The eIF-3 complex is also required for disassembly and recycling of post-termination ribosomal complexes and subsequently prevents premature joining of the 40S and 60S ribosomal subunits prior to initiation. The eIF-3 complex specifically targets and initiates translation of a subset of mRNAs involved in cell proliferation, including cell cycling, differentiation and apoptosis, and uses different modes of RNA stem-loop binding to exert either translational activation or repression. The chain is Eukaryotic translation initiation factor 3 subunit I from Oryctolagus cuniculus (Rabbit).